Consider the following 375-residue polypeptide: Chaperone protein DnaJ (375 aa).

A J domain is found at 4-68 (DYYEILGVSR…ETRARYDRFG (65 aa)). A CR-type zinc finger spans residues 134 to 216 (GGEKEIRIRH…CGGSGRKQET (83 aa)). Residues Cys147, Cys150, Cys164, Cys167, Cys190, Cys193, Cys204, and Cys207 each coordinate Zn(2+). 4 CXXCXGXG motif repeats span residues 147-154 (CQVCEGSG), 164-171 (CSTCSGSG), 190-197 (CPTCNGSG), and 204-211 (CEACGGSG).

Belongs to the DnaJ family. As to quaternary structure, homodimer. Requires Zn(2+) as cofactor.

It is found in the cytoplasm. Participates actively in the response to hyperosmotic and heat shock by preventing the aggregation of stress-denatured proteins and by disaggregating proteins, also in an autonomous, DnaK-independent fashion. Unfolded proteins bind initially to DnaJ; upon interaction with the DnaJ-bound protein, DnaK hydrolyzes its bound ATP, resulting in the formation of a stable complex. GrpE releases ADP from DnaK; ATP binding to DnaK triggers the release of the substrate protein, thus completing the reaction cycle. Several rounds of ATP-dependent interactions between DnaJ, DnaK and GrpE are required for fully efficient folding. Also involved, together with DnaK and GrpE, in the DNA replication of plasmids through activation of initiation proteins. The sequence is that of Chaperone protein DnaJ from Gloeothece citriformis (strain PCC 7424) (Cyanothece sp. (strain PCC 7424)).